We begin with the raw amino-acid sequence, 362 residues long: Cobalt-precorrin-5B C(1)-methyltransferase (362 aa).

It belongs to the CbiD family.

The catalysed reaction is Co-precorrin-5B + S-adenosyl-L-methionine = Co-precorrin-6A + S-adenosyl-L-homocysteine. It functions in the pathway cofactor biosynthesis; adenosylcobalamin biosynthesis; cob(II)yrinate a,c-diamide from sirohydrochlorin (anaerobic route): step 6/10. Functionally, catalyzes the methylation of C-1 in cobalt-precorrin-5B to form cobalt-precorrin-6A. This is Cobalt-precorrin-5B C(1)-methyltransferase from Geotalea daltonii (strain DSM 22248 / JCM 15807 / FRC-32) (Geobacter daltonii).